The sequence spans 206 residues: Elongation factor Ts (206 aa).

Residues 81–84 (TDFV) form an involved in Mg(2+) ion dislocation from EF-Tu region.

Belongs to the EF-Ts family.

The protein resides in the cytoplasm. Associates with the EF-Tu.GDP complex and induces the exchange of GDP to GTP. It remains bound to the aminoacyl-tRNA.EF-Tu.GTP complex up to the GTP hydrolysis stage on the ribosome. The chain is Elongation factor Ts from Maridesulfovibrio salexigens (strain ATCC 14822 / DSM 2638 / NCIMB 8403 / VKM B-1763) (Desulfovibrio salexigens).